A 656-amino-acid chain; its full sequence is uncharacterized protein (656 aa).

Disordered regions lie at residues M1–G41 and S60–E88. A compositionally biased stretch (low complexity) spans S22 to V36. S39 carries the post-translational modification Phosphoserine. A compositionally biased stretch (basic and acidic residues) spans K62 to T78.

It is found in the cytoplasm. The protein localises to the mitochondrion. This is an uncharacterized protein from Saccharomyces cerevisiae (strain ATCC 204508 / S288c) (Baker's yeast).